We begin with the raw amino-acid sequence, 913 residues long: DNA polymerase (913 aa).

The tract at residues 182 to 401 (PLIIASWDIE…AYARKDTDLP (220 aa)) is contains conserved residues essential for 3' -&gt; 5' exonuclease activities.

This sequence belongs to the DNA polymerase type-B family.

It carries out the reaction DNA(n) + a 2'-deoxyribonucleoside 5'-triphosphate = DNA(n+1) + diphosphate. Its function is as follows. In addition to polymerase activity, this DNA polymerase potentially exhibits 3' to 5' exonuclease activity. The polypeptide is DNA polymerase (DPO) (Chlorella (PBCV-NY2A)).